Reading from the N-terminus, the 155-residue chain is Endoribonuclease YbeY (155 aa).

Zn(2+) contacts are provided by His120, His124, and His130.

It belongs to the endoribonuclease YbeY family. Zn(2+) is required as a cofactor.

Its subcellular location is the cytoplasm. Single strand-specific metallo-endoribonuclease involved in late-stage 70S ribosome quality control and in maturation of the 3' terminus of the 16S rRNA. This is Endoribonuclease YbeY from Borreliella burgdorferi (strain ATCC 35210 / DSM 4680 / CIP 102532 / B31) (Borrelia burgdorferi).